An 850-amino-acid polypeptide reads, in one-letter code: Transcription initiation factor TFIID subunit 4B (850 aa).

The segment at 99–240 (GTTTIQLPAN…TPSNDARLKA (142 aa)) is sufficient for interaction with ZNF628. Positions 256 to 353 (ENVKKCKNFL…VKEVSGDVVI (98 aa)) constitute a TAFH domain. The segment at 504-526 (PSTLLPQAAGIPQTAKVKQLVVQ) is required for interaction with P65/RELA. The Nuclear export signal signature appears at 509-549 (PQAAGIPQTAKVKQLVVQQPSGSSVNHVTSISHSSPLSTQN). Ser584 carries the phosphoserine modification. The 50-residue stretch at 642–691 (PFLVIGALQKRILDIGKKHDITELNSDAVNLISHATQERLRGLLEKLTTI) folds into the Histone-fold domain. The tract at residues 788-812 (KRPLESGNESFKDNPSTSGTSSLTA) is disordered. Positions 794 to 812 (GNESFKDNPSTSGTSSLTA) are enriched in polar residues. The segment at 818–850 (PRITRICLRDLIFCMEQEREMKYSRALYLALLK) is required for interaction with TAF12.

The protein belongs to the TAF4 family. As to quaternary structure, TFIID is composed of TATA binding protein (TBP) and a number of TBP-associated factors (TAFs). Heterodimerizes with TAF12/TFII20 via the C-terminal H2A-like histone-fold domain. This heterodimer forms a histone-like octamer with the TAF6/TAFII70-TAF9/TAFII31 heterodimer. Interacts with P65/RELA homodimers and P65/RELA-REL heterodimers. Interaction with POU2AF1, via its C-terminal activation domain, is required for octamer-dependent transcription. Interacts with ZNF628. Highly expressed in the testes and ovary, whereas lower levels are detected in most other tissues.

The protein resides in the nucleus. Its subcellular location is the cytoplasm. In terms of biological role, cell type-specific subunit of the general transcription factor TFIID that may function as a gene-selective coactivator in certain cells. TFIID is a multimeric protein complex that plays a central role in mediating promoter responses to various activators asond repressors. TAF4B is a transcriptional coactivator of the p65/RELA NF-kappa-B subunit. Involved in the activation of a subset of antiapoptotic genes including TNFAIP3. Through interaction with OCBA/POU2AF1, acts as a coactivator of B-cell-specific transcription. Plays a role in spermiogenesis and oogenesis. The polypeptide is Transcription initiation factor TFIID subunit 4B (Taf4b) (Mus musculus (Mouse)).